A 265-amino-acid polypeptide reads, in one-letter code: Thioredoxin-related transmembrane protein 2 homolog (265 aa).

Positions 1–32 are cleaved as a signal peptide; that stretch reads MLIPRLDEVRRALTAFHFFNTLLALAFPVIRS. The Extracellular portion of the chain corresponds to 33–96; sequence TSLCDYVFAV…KIAGMFLFIR (64 aa). Residues 97–117 traverse the membrane as a helical segment; that stretch reads ADILPGIIYILACLIVTVLFP. Over 118–265 the chain is Cytoplasmic; that stretch reads EPVYNGPEQV…KKGAKAKKED (148 aa). The region spanning 126–230 is the Thioredoxin domain; it reads QVTYFQGEQL…RPLVNDSRRA (105 aa). Residues 262-265 carry the Di-lysine motif motif; it reads KKED.

The protein localises to the membrane. The polypeptide is Thioredoxin-related transmembrane protein 2 homolog (Caenorhabditis elegans).